We begin with the raw amino-acid sequence, 239 residues long: tRNA1(Val) (adenine(37)-N6)-methyltransferase (239 aa).

The protein belongs to the methyltransferase superfamily. tRNA (adenine-N(6)-)-methyltransferase family.

It is found in the cytoplasm. The enzyme catalyses adenosine(37) in tRNA1(Val) + S-adenosyl-L-methionine = N(6)-methyladenosine(37) in tRNA1(Val) + S-adenosyl-L-homocysteine + H(+). Functionally, specifically methylates the adenine in position 37 of tRNA(1)(Val) (anticodon cmo5UAC). This is tRNA1(Val) (adenine(37)-N6)-methyltransferase from Vibrio parahaemolyticus serotype O3:K6 (strain RIMD 2210633).